We begin with the raw amino-acid sequence, 640 residues long: RecBCD enzyme subunit RecD (640 aa).

194–201 serves as a coordination point for ATP; the sequence is GGPGTGKT.

This sequence belongs to the RecD family. In terms of assembly, heterotrimer of RecB, RecC and RecD. All subunits contribute to DNA-binding.

The enzyme catalyses Couples ATP hydrolysis with the unwinding of duplex DNA at the replication fork by translocating in the 5'-3' direction. This creates two antiparallel DNA single strands (ssDNA). The leading ssDNA polymer is the template for DNA polymerase III holoenzyme which synthesizes a continuous strand.. It catalyses the reaction ATP + H2O = ADP + phosphate + H(+). In terms of biological role, a helicase/nuclease that prepares dsDNA breaks (DSB) for recombinational DNA repair. Binds to DSBs and unwinds DNA via a highly rapid and processive ATP-dependent bidirectional helicase activity. Unwinds dsDNA until it encounters a Chi (crossover hotspot instigator) sequence from the 3' direction. Cuts ssDNA a few nucleotides 3' to the Chi site. The properties and activities of the enzyme are changed at Chi. The Chi-altered holoenzyme produces a long 3'-ssDNA overhang and facilitates RecA-binding to the ssDNA for homologous DNA recombination and repair. Holoenzyme degrades any linearized DNA that is unable to undergo homologous recombination. In the holoenzyme this subunit has ssDNA-dependent ATPase and 5'-3' helicase activity. When added to pre-assembled RecBC greatly stimulates nuclease activity and augments holoenzyme processivity. Negatively regulates the RecA-loading ability of RecBCD. This Haemophilus influenzae (strain ATCC 51907 / DSM 11121 / KW20 / Rd) protein is RecBCD enzyme subunit RecD.